Here is a 565-residue protein sequence, read N- to C-terminus: Periplasmic trehalase (565 aa).

The signal sequence occupies residues 1–30 (MKSPTPSRPQKMALIPACIFLCFAALSVQA). Substrate contacts are provided by residues arginine 152, 159–160 (WD), asparagine 196, 205–207 (RSQ), 277–279 (RPE), and glycine 310. Residues aspartate 312 and glutamate 496 each act as proton donor/acceptor in the active site. Glutamate 511 provides a ligand contact to substrate. The interval 539 to 565 (CDNVPATRPLSESTTQPLKQKEAEPTP) is disordered.

This sequence belongs to the glycosyl hydrolase 37 family. In terms of assembly, monomer.

It localises to the periplasm. It carries out the reaction alpha,alpha-trehalose + H2O = alpha-D-glucose + beta-D-glucose. Its function is as follows. Provides the cells with the ability to utilize trehalose at high osmolarity by splitting it into glucose molecules that can subsequently be taken up by the phosphotransferase-mediated uptake system. This is Periplasmic trehalase from Escherichia coli O7:K1 (strain IAI39 / ExPEC).